Reading from the N-terminus, the 324-residue chain is Mevalonate-3-kinase (324 aa).

Leu19 contacts substrate. 109–112 (SGSS) contacts ATP. Substrate-binding residues include Glu145 and Arg149. Positions 190 and 193 each coordinate ATP.

The protein belongs to the GHMP kinase family. Homodimer.

It carries out the reaction (R)-mevalonate + ATP = (R)-3-phosphomevalonate + ADP + H(+). It functions in the pathway isoprenoid biosynthesis; isopentenyl diphosphate biosynthesis via mevalonate pathway. Its function is as follows. Catalyzes the phosphorylation of mevalonate (MVA) to yield mevalonate-3-phosphate. Functions in an alternative mevalonate pathway, which passes through mevalonate 3-phosphate rather than mevalonate 5-phosphate. Also able to catalyze the formation of isobutene via the conversion of 3-hydroxyisovalerate (3-HIV) to an unstable 3-phosphate intermediate that undergoes a spontaneous decarboxylation. This is Mevalonate-3-kinase from Picrophilus torridus (strain ATCC 700027 / DSM 9790 / JCM 10055 / NBRC 100828 / KAW 2/3).